The primary structure comprises 189 residues: Peptidyl-tRNA hydrolase (189 aa).

Position 14 (His-14) interacts with tRNA. His-19 (proton acceptor) is an active-site residue. TRNA contacts are provided by Tyr-64, Asn-66, and Asn-112.

This sequence belongs to the PTH family. Monomer.

The protein resides in the cytoplasm. The catalysed reaction is an N-acyl-L-alpha-aminoacyl-tRNA + H2O = an N-acyl-L-amino acid + a tRNA + H(+). Functionally, hydrolyzes ribosome-free peptidyl-tRNAs (with 1 or more amino acids incorporated), which drop off the ribosome during protein synthesis, or as a result of ribosome stalling. Catalyzes the release of premature peptidyl moieties from peptidyl-tRNA molecules trapped in stalled 50S ribosomal subunits, and thus maintains levels of free tRNAs and 50S ribosomes. This is Peptidyl-tRNA hydrolase from Chlorobium phaeobacteroides (strain BS1).